Here is a 592-residue protein sequence, read N- to C-terminus: BRCA1-associated protein (592 aa).

The residue at position 52 (Ser52) is a Phosphoserine. A disordered region spans residues 78–124; sequence KSNPDELKTTVEERKSSEASPTAQRSKDHSKECINAAPDSPSKQLPD. The span at 80 to 94 shows a compositional bias: basic and acidic residues; that stretch reads NPDELKTTVEERKSS. Residues Ser97, Ser117, and Ser119 each carry the phosphoserine modification. The segment at 264–304 adopts an RING-type zinc-finger fold; sequence CTVCLERMDESVNGILTTLCNHSFHSQCLQRWDDTTCPVCR. The UBP-type; degenerate zinc finger occupies 301 to 393; sequence PVCRYCQTPE…GKIVQYECEG (93 aa). Positions 317, 320, 329, 332, 337, 344, 348, and 354 each coordinate Zn(2+). Residues 429–537 are a coiled coil; sequence RIEKDTAEEI…EIQEQLRDVM (109 aa). Positions 565 to 592 are disordered; it reads AMASASSPASSGGSGKLPSRKGRSKRGK. A compositionally biased stretch (basic residues) spans 582–592; that stretch reads PSRKGRSKRGK.

Interacts with the nuclear localization signal of BRCA1 and with the N-terminal of KSR1. The C-terminal portion of BCRA1 interacts with DDB1. Expressed in breast epithelial cell lines.

It localises to the cytoplasm. The catalysed reaction is S-ubiquitinyl-[E2 ubiquitin-conjugating enzyme]-L-cysteine + [acceptor protein]-L-lysine = [E2 ubiquitin-conjugating enzyme]-L-cysteine + N(6)-ubiquitinyl-[acceptor protein]-L-lysine.. Its pathway is protein modification; protein ubiquitination. In terms of biological role, negatively regulates MAP kinase activation by limiting the formation of Raf/MEK complexes probably by inactivation of the KSR1 scaffold protein. Also acts as a Ras responsive E3 ubiquitin ligase that, on activation of Ras, is modified by auto-polyubiquitination resulting in the release of inhibition of Raf/MEK complex formation. May also act as a cytoplasmic retention protein with a role in regulating nuclear transport. This chain is BRCA1-associated protein, found in Homo sapiens (Human).